The sequence spans 350 residues: Leucine-rich repeat-containing protein 58 (350 aa).

LRR repeat units follow at residues 14–34 (NLTH…NKRK), 35–56 (DVQQ…VASF), 58–80 (HLHL…LGLT), 81–102 (KLKT…KEMG), 105–125 (RLEV…QFLQ), 128–149 (TLKS…IENL), 151–173 (SLEF…ANLP), 174–195 (YLSY…LAQV), 197–218 (SLRS…ILSL), and 220–240 (HLHE…RDLT).

The chain is Leucine-rich repeat-containing protein 58 (lrrc58) from Xenopus laevis (African clawed frog).